Reading from the N-terminus, the 121-residue chain is uncharacterized protein (121 aa).

Transmembrane regions (helical) follow at residues 12-32 (MIGIAALAVGIVLGLVFHPGV), 35-55 (VIQPYLPIAVVAALDAVFGGL), and 67-87 (VFVVSFVFNVLVAALIVYVGD).

The protein belongs to the sbp family.

It is found in the cell membrane. This is an uncharacterized protein from Mycobacterium bovis (strain ATCC BAA-935 / AF2122/97).